The primary structure comprises 741 residues: Catalase-peroxidase (741 aa).

The tryptophyl-tyrosyl-methioninium (Trp-Tyr) (with M-234) cross-link spans 86–208 (WHSAGSYRIF…FAATEMGLIY (123 aa)). The Proton acceptor role is filled by histidine 87. The tryptophyl-tyrosyl-methioninium (Tyr-Met) (with W-86) cross-link spans 208 to 234 (YVNPEGPGGNPDPLGSAQEIRVAFRRM). A heme b-binding site is contributed by histidine 249.

It belongs to the peroxidase family. Peroxidase/catalase subfamily. In terms of assembly, homodimer or homotetramer. It depends on heme b as a cofactor. Post-translationally, formation of the three residue Trp-Tyr-Met cross-link is important for the catalase, but not the peroxidase activity of the enzyme.

It catalyses the reaction H2O2 + AH2 = A + 2 H2O. The catalysed reaction is 2 H2O2 = O2 + 2 H2O. Bifunctional enzyme with both catalase and broad-spectrum peroxidase activity. Also displays NADH oxidase, INH lyase and isonicotinoyl-NAD synthase activities. This Archaeoglobus fulgidus (strain ATCC 49558 / DSM 4304 / JCM 9628 / NBRC 100126 / VC-16) protein is Catalase-peroxidase.